Reading from the N-terminus, the 479-residue chain is Ribosomal RNA small subunit methyltransferase F (479 aa).

Residues Ala-125–Lys-131, Glu-149, Asp-176, and Asp-194 each bind S-adenosyl-L-methionine. Cys-247 acts as the Nucleophile in catalysis.

The protein belongs to the class I-like SAM-binding methyltransferase superfamily. RsmB/NOP family.

It is found in the cytoplasm. The enzyme catalyses cytidine(1407) in 16S rRNA + S-adenosyl-L-methionine = 5-methylcytidine(1407) in 16S rRNA + S-adenosyl-L-homocysteine + H(+). Specifically methylates the cytosine at position 1407 (m5C1407) of 16S rRNA. The protein is Ribosomal RNA small subunit methyltransferase F of Escherichia coli (strain SE11).